Consider the following 193-residue polypeptide: PXMP2/4 family protein 2 (193 aa).

The next 4 membrane-spanning stretches (helical) occupy residues 56–78 (VATMSTVGIFYSGPMLHYWYRSL), 96–116 (IDQLLFAPVAIGGFMTVTNFI), 132–152 (LFYAVKINWLIWPAAQIINFS), and 160–180 (VLYSSIISIFWGMFLSHISFD).

It belongs to the peroxisomal membrane protein PXMP2/4 family.

The protein resides in the membrane. This Dictyostelium discoideum (Social amoeba) protein is PXMP2/4 family protein 2.